Reading from the N-terminus, the 323-residue chain is Acetyl esterase (323 aa).

The Involved in the stabilization of the negatively charged intermediate by the formation of the oxyanion hole signature appears at 91–93 (HGG). Residues S165, D262, and H292 contribute to the active site.

It belongs to the 'GDXG' lipolytic enzyme family. As to quaternary structure, homodimer. Interacts with MalT and MelA.

The protein resides in the cytoplasm. Its function is as follows. Displays esterase activity towards short chain fatty esters (acyl chain length of up to 8 carbons). Able to hydrolyze triacetylglycerol (triacetin) and tributyrylglycerol (tributyrin), but not trioleylglycerol (triolein) or cholesterol oleate. Negatively regulates MalT activity by antagonizing maltotriose binding. Inhibits MelA galactosidase activity. This is Acetyl esterase from Salmonella paratyphi B (strain ATCC BAA-1250 / SPB7).